A 168-amino-acid polypeptide reads, in one-letter code: Endoribonuclease YbeY (168 aa).

3 residues coordinate Zn(2+): His-122, His-126, and His-132.

The protein belongs to the endoribonuclease YbeY family. The cofactor is Zn(2+).

The protein localises to the cytoplasm. Its function is as follows. Single strand-specific metallo-endoribonuclease involved in late-stage 70S ribosome quality control and in maturation of the 3' terminus of the 16S rRNA. This Brucella abortus (strain 2308) protein is Endoribonuclease YbeY.